Reading from the N-terminus, the 104-residue chain is Large ribosomal subunit protein eL30 (104 aa).

The protein belongs to the eukaryotic ribosomal protein eL30 family.

The sequence is that of Large ribosomal subunit protein eL30 (RPL30) from Tetrahymena thermophila (strain SB210).